The following is a 395-amino-acid chain: Flagellin A (395 aa).

The protein belongs to the bacterial flagellin family.

The protein resides in the secreted. Its subcellular location is the bacterial flagellum. Functionally, flagellin is the subunit protein which polymerizes to form the filaments of bacterial flagella. Homomer of FlaA is able to form a functional filament. This chain is Flagellin A (flaA), found in Rhizobium meliloti (Ensifer meliloti).